We begin with the raw amino-acid sequence, 1253 residues long: Cytoplasmic FMR1-interacting protein 1 homolog (1253 aa).

The protein belongs to the CYFIP family.

The protein resides in the cytoplasm. It localises to the perinuclear region. It is found in the cell projection. Its subcellular location is the lamellipodium. The protein localises to the ruffle. The protein resides in the synapse. It localises to the synaptosome. Functionally, involved in formation of membrane ruffles and lamellipodia protrusions and in axon outgrowth. Binds to F-actin but not to RNA. This is Cytoplasmic FMR1-interacting protein 1 homolog from Danio rerio (Zebrafish).